The chain runs to 245 residues: Ribosomal protein L11 methyltransferase (245 aa).

Residues T101, G122, D144, and N184 each contribute to the S-adenosyl-L-methionine site.

The protein belongs to the methyltransferase superfamily. PrmA family.

It localises to the cytoplasm. It catalyses the reaction L-lysyl-[protein] + 3 S-adenosyl-L-methionine = N(6),N(6),N(6)-trimethyl-L-lysyl-[protein] + 3 S-adenosyl-L-homocysteine + 3 H(+). Its function is as follows. Methylates ribosomal protein L11. This is Ribosomal protein L11 methyltransferase from Aquifex aeolicus (strain VF5).